Consider the following 879-residue polypeptide: Alanine--tRNA ligase (879 aa).

The Zn(2+) site is built by H566, H570, C668, and H672.

This sequence belongs to the class-II aminoacyl-tRNA synthetase family. It depends on Zn(2+) as a cofactor.

It localises to the cytoplasm. The catalysed reaction is tRNA(Ala) + L-alanine + ATP = L-alanyl-tRNA(Ala) + AMP + diphosphate. In terms of biological role, catalyzes the attachment of alanine to tRNA(Ala) in a two-step reaction: alanine is first activated by ATP to form Ala-AMP and then transferred to the acceptor end of tRNA(Ala). Also edits incorrectly charged Ser-tRNA(Ala) and Gly-tRNA(Ala) via its editing domain. The protein is Alanine--tRNA ligase of Clostridium novyi (strain NT).